The primary structure comprises 357 residues: Peptide chain release factor 1 (357 aa).

Gln-236 carries the N5-methylglutamine modification. The span at 283–309 (ERRKKDQERANNRREQIGSGDRSERIR) shows a compositional bias: basic and acidic residues. The interval 283–313 (ERRKKDQERANNRREQIGSGDRSERIRTYNF) is disordered.

This sequence belongs to the prokaryotic/mitochondrial release factor family. Methylated by PrmC. Methylation increases the termination efficiency of RF1.

The protein localises to the cytoplasm. Its function is as follows. Peptide chain release factor 1 directs the termination of translation in response to the peptide chain termination codons UAG and UAA. In Rickettsia bellii (strain OSU 85-389), this protein is Peptide chain release factor 1.